Reading from the N-terminus, the 613-residue chain is Zinc metalloproteinase-disintegrin-like VMP-III (613 aa).

The first 20 residues, 1 to 20 (MIQVLLVTLCLAAFPYQGSS), serve as a signal peptide directing secretion. The propeptide occupies 21–190 (IILDSGNVND…KKASQLVVTP (170 aa)). One can recognise a Peptidase M12B domain in the interval 200-396 (KYIELVIVAD…NRPPCILNKP (197 aa)). E203 lines the Ca(2+) pocket. Residue N219 is glycosylated (N-linked (GlcNAc...) asparagine). Ca(2+) is bound at residue D287. 3 disulfides stabilise this stretch: C311–C391, C351–C375, and C353–C358. H336 is a binding site for Zn(2+). Residue E337 is part of the active site. Zn(2+)-binding residues include H340 and H346. Positions 391, 394, 406, 409, 411, 413, 416, and 419 each coordinate Ca(2+). A Disintegrin domain is found at 404–490 (PPVCGNYFVE…ECPTDDFQRN (87 aa)). Disulfide bonds link C407–C436, C418–C431, C420–C426, C430–C453, C444–C450, C449–C475, C462–C482, C469–C501, C494–C506, C513–C563, C528–C574, C541–C551, C558–C600, and C594–C606. The D/ECD-tripeptide motif lies at 468 to 470 (ECD). N503 carries an N-linked (GlcNAc...) asparagine glycan.

This sequence belongs to the venom metalloproteinase (M12B) family. P-III subfamily. P-IIIa sub-subfamily. Monomer. Requires Zn(2+) as cofactor. In terms of tissue distribution, expressed by the venom gland.

It localises to the secreted. Its function is as follows. Snake venom metalloproteinase that impairs hemostasis in the envenomed animal. This chain is Zinc metalloproteinase-disintegrin-like VMP-III, found in Agkistrodon piscivorus leucostoma (Western cottonmouth).